Reading from the N-terminus, the 182-residue chain is Fatty-acid and retinol-binding protein 1 (182 aa).

The signal sequence occupies residues 1–17 (MIRATIILAAVAALAFS). Residues 86-106 (EKASKLHQIVKDKVNALNDEA) adopt a coiled-coil conformation.

The protein belongs to the fatty-acid and retinol-binding protein (FARBP) family.

It is found in the secreted. Its function is as follows. Probably binds lipids. This chain is Fatty-acid and retinol-binding protein 1 (far-1), found in Caenorhabditis elegans.